Here is a 414-residue protein sequence, read N- to C-terminus: uncharacterized protein (414 aa).

The chain crosses the membrane as a helical span at residues 367 to 384; sequence TTWALTLICIACILLFFV.

The protein localises to the virion membrane. This is an uncharacterized protein from Human cytomegalovirus (strain Merlin) (HHV-5).